Consider the following 401-residue polypeptide: Lipid-A-disaccharide synthase (401 aa).

Belongs to the LpxB family.

It catalyses the reaction a lipid X + a UDP-2-N,3-O-bis[(3R)-3-hydroxyacyl]-alpha-D-glucosamine = a lipid A disaccharide + UDP + H(+). It functions in the pathway bacterial outer membrane biogenesis; LPS lipid A biosynthesis. In terms of biological role, condensation of UDP-2,3-diacylglucosamine and 2,3-diacylglucosamine-1-phosphate to form lipid A disaccharide, a precursor of lipid A, a phosphorylated glycolipid that anchors the lipopolysaccharide to the outer membrane of the cell. In Ruegeria pomeroyi (strain ATCC 700808 / DSM 15171 / DSS-3) (Silicibacter pomeroyi), this protein is Lipid-A-disaccharide synthase.